We begin with the raw amino-acid sequence, 788 residues long: MKPTTRCPFDYLVSQCGKHHFKTFVQLLSPLLQDEDPDRYALILDIMDAVHFSAILIDDIANQSALRRNQPAAHVVFGETETATRAYLVLLRVVNRTMRENPVLAGELLNSLEEIHQGQDESLVWRRDGLETFPVADDERLAAYVRMSRLKTGSLFVLLGRLLANGGTEFDDLLVRFGLYAQLQHDCKNIYSPEYALNKGSVAEDLRNGELSYPVVVALIENKAEGIVGEALRTRSDGDTEQALRVLESPAVKDACLHALEAASVGLEDLVEAWGRREKMRSDTLDGDDLTRPSTITQHEQDDHVDRAAIDAKSDASGSSNKSLTPPETAPTTDTLSETAVGDISSVDVDYWTRRCVPIIGSLLKSCRVYSEAERETQLRFLQEHVLPNLGPRPSSPGSQIQSMATFSGFPLQPSINLSGSGQAKVRYTFEPLDSLSGTEVDPFALAPAQRVLEKLSTLLGVWPGWIDALIAAYHPTREEVEQLHPNLHEYLRGVLVRTTGRQDVQVPPMPRMWVCFVALDLEGASQALKVYFDPKIKEAVTGIPSCKYTCQILRTVDRFGNAKAVDMLEQFLAEEHSIGAVELIAIDCVPEEMQPSARIKVYVHTMSNSFQTVRKYMTMGGRCMDPATLEGLENLHDVWYSLLGESQGIVNEEYSKPLTGFSSMQHHLYFSYEMTPGNADPGVKVYIPVQSYAPDDKTIAQNYEANFRQLNWPWGEPGVYEAVIESALGPVKHSRATFLHGGSSFIFSKGRGVYQSIYLDPPLEEGGNIAVFEHHDDQDTIVDLGNM.

Positions 18 and 51 each coordinate substrate. Asp58 is a Mg(2+) binding site. 6 residues coordinate substrate: Arg67, Lys151, Thr152, Gln182, Asn189, and Lys199. The disordered stretch occupies residues 283 to 337 (DTLDGDDLTRPSTITQHEQDDHVDRAAIDAKSDASGSSNKSLTPPETAPTTDTLS). Over residues 299-314 (HEQDDHVDRAAIDAKS) the composition is skewed to basic and acidic residues. Residues 316–337 (ASGSSNKSLTPPETAPTTDTLS) show a composition bias toward polar residues. 404-405 (MA) lines the L-tryptophan pocket. 5 residues coordinate substrate: Arg427, Arg599, Lys601, Tyr603, and Tyr687.

In the N-terminal section; belongs to the FPP/GGPP synthase family. The protein in the C-terminal section; belongs to the tryptophan dimethylallyltransferase family. Mg(2+) is required as a cofactor.

Its pathway is secondary metabolite biosynthesis. In terms of biological role, multi-functional prenyltransferase; part of the gene cluster that mediates the biosynthesis of lolitrems, indole-diterpene mycotoxins that are potent tremorgens in mammals, and are synthesized by clavicipitaceous fungal endophytes in association with their grass hosts. The geranylgeranyl diphosphate (GGPP) synthase ltmG is proposed to catalyze the first step in lolitrem biosynthesis. LtmG catalyzes a series of iterative condensations of isopentenyl diphosphate (IPP) with dimethylallyl diphosphate (DMAPP), geranyl diphosphate (GPP), and farnesyl diphosphate (FPP), to form GGPP. GGPP then condenses with indole-3-glycerol phosphate to form 3-geranylgeranylindole, an acyclic intermediate, to be incorporated into paxilline. Either ltmG or ltmC could be responsible for this step, as both are putative prenyl transferases. The FAD-dependent monooxygenase ltmM then catalyzes the epoxidation of the two terminal alkenes of the geranylgeranyl moiety, which is subsequently cyclized by ltmB, to paspaline. The cytochrome P450 monooxygenases ltmQ and ltmP can sequentially oxidize paspaline to terpendole E and terpendole F. Alternatively, ltmP converts paspaline to an intermediate which is oxidized by ltmQ to terpendole F. LtmF, ltmK, ltmE and ltmJ appear to be unique to the epichloe endophytes. The prenyltransferase ltmF is involved in the 27-hydroxyl-O-prenylation. The cytochrome P450 monooxygenase ltmK is required for the oxidative acetal ring formation. The multi-functional prenyltransferase ltmE is required for C20- and C21-prenylations of the indole ring of paspalanes and acts together with the cytochrome P450 monooxygenase ltmJ to yield lolitremanes by multiple oxidations and ring closures. The stereoisomer pairs of lolitriol and lolitrem N or lolitrem B and lolitrem F may be attributed to variations in the way in which ring closure can occur under the action of ltmJ. While the major product of this pathway is lolitrem B, the prenyl transferases and cytochrome P450 monooxygenases identified in this pathway have a remarkable versatility in their regio- and stereo-specificities to generate a diverse range of metabolites that are products of a metabolic grid rather than a linear pathway. The chain is Multi-functional prenyltransferase ltmE from Epichloe festucae var. lolii (Neotyphodium lolii).